Reading from the N-terminus, the 473-residue chain is Probable lipid II flippase MurJ (473 aa).

A run of 13 helical transmembrane segments spans residues 31-51 (TFGASSTLDAYYVSIVFPFFL), 90-110 (LVTLLIVFLSEVFPYFMASIF), 125-145 (LIRLTAPFITIVFVWAVFYSV), 153-173 (FLPALTPMFSNVGVIVGCLFG), 177-197 (WAAAGFTIGGLAALLVLLPFG), 215-235 (FFGTFMTMAVSQVTTLIDVNV), 253-273 (LYQLPLGIFGVAVSTVALSTL), 300-320 (IGLMALSERIISLLFGYGAFT), 327-347 (SAQILFMYAIGLCFVSLFNLL), 360-380 (PFFATLLVSAVNISLDVILGF), 382-402 (MGASGIALATSVSYIAGFVFL), 414-434 (IFKISLASAVMGTVILLLRGS), and 439-459 (LGTIFLVLIGVFVYVLFSKLL).

Belongs to the MurJ/MviN family.

The protein localises to the cell inner membrane. Its pathway is cell wall biogenesis; peptidoglycan biosynthesis. Its function is as follows. Involved in peptidoglycan biosynthesis. Transports lipid-linked peptidoglycan precursors from the inner to the outer leaflet of the cytoplasmic membrane. The protein is Probable lipid II flippase MurJ of Thermotoga maritima (strain ATCC 43589 / DSM 3109 / JCM 10099 / NBRC 100826 / MSB8).